Consider the following 132-residue polypeptide: Large ribosomal subunit protein bL17 (132 aa).

This sequence belongs to the bacterial ribosomal protein bL17 family. As to quaternary structure, part of the 50S ribosomal subunit. Contacts protein L32.

The sequence is that of Large ribosomal subunit protein bL17 from Marinobacter nauticus (strain ATCC 700491 / DSM 11845 / VT8) (Marinobacter aquaeolei).